The chain runs to 516 residues: Na(+)/H(+) antiporter NhaB (516 aa).

12 consecutive transmembrane segments (helical) span residues 23 to 43 (LALI…PFVA), 61 to 80 (CYPL…IGMT), 97 to 117 (LLLI…LFVF), 120 to 140 (LLLG…AAAF), 144 to 164 (FLDA…FYGI), 202 to 222 (LMMH…VGEP), 238 to 258 (FFIR…LTCL), 303 to 323 (AVIG…VGLI), 348 to 368 (TEAL…AVII), 391 to 411 (LFYL…VGTV), 447 to 467 (ATPN…APLI), and 475 to 495 (VWMA…CVEF).

The protein belongs to the NhaB Na(+)/H(+) (TC 2.A.34) antiporter family.

The protein resides in the cell inner membrane. The enzyme catalyses 2 Na(+)(in) + 3 H(+)(out) = 2 Na(+)(out) + 3 H(+)(in). Its function is as follows. Na(+)/H(+) antiporter that extrudes sodium in exchange for external protons. The sequence is that of Na(+)/H(+) antiporter NhaB from Klebsiella pneumoniae (strain 342).